The following is a 201-amino-acid chain: Small ribosomal subunit protein uS4 (201 aa).

An S4 RNA-binding domain is found at 91-154; sequence TRLDNVVYRA…RKMEWFEEAQ (64 aa).

Belongs to the universal ribosomal protein uS4 family. Part of the 30S ribosomal subunit. Contacts protein S5. The interaction surface between S4 and S5 is involved in control of translational fidelity.

One of the primary rRNA binding proteins, it binds directly to 16S rRNA where it nucleates assembly of the body of the 30S subunit. In terms of biological role, with S5 and S12 plays an important role in translational accuracy. The protein is Small ribosomal subunit protein uS4 of Corynebacterium ammoniagenes (Brevibacterium ammoniagenes).